Reading from the N-terminus, the 147-residue chain is Hemoglobin subunit gamma (147 aa).

The region spanning His3–His147 is the Globin domain. Residues His64 and His93 each contribute to the heme b site.

The protein belongs to the globin family. Heterotetramer of two alpha chains and two gamma chains in fetal hemoglobin (Hb F). Red blood cells.

Gamma chains make up the fetal hemoglobin F, in combination with alpha chains. This Loxodonta africana (African elephant) protein is Hemoglobin subunit gamma (HBG).